The primary structure comprises 164 residues: Nucleotide-binding protein Helmi_22490 (164 aa).

Belongs to the YajQ family.

Nucleotide-binding protein. The sequence is that of Nucleotide-binding protein Helmi_22490 from Heliobacterium modesticaldum (strain ATCC 51547 / Ice1).